The sequence spans 91 residues: C-C motif chemokine 5 (91 aa).

An N-terminal signal peptide occupies residues 1–23 (MKISAAALTIILTAAALCTPAPA). 2 cysteine pairs are disulfide-bonded: Cys-33–Cys-57 and Cys-34–Cys-73.

It belongs to the intercrine beta (chemokine CC) family. In terms of tissue distribution, T-cell and macrophage specific.

The protein localises to the secreted. Its function is as follows. Chemoattractant for blood monocytes, memory T-helper cells and eosinophils. Causes the release of histamine from basophils and activates eosinophils. May activate several chemokine receptors including CCR1, CCR3, CCR4 and CCR5. May also be an agonist of the G protein-coupled receptor GPR75. Together with GPR75, may play a role in neuron survival through activation of a downstream signaling pathway involving the PI3, Akt and MAP kinases. By activating GPR75 may also play a role in insulin secretion by islet cells. This is C-C motif chemokine 5 (Ccl5) from Mus musculus (Mouse).